The following is a 200-amino-acid chain: Phospholipase A2 inhibitor CNF (200 aa).

A signal peptide spans 1–19 (MKYLHTICLLFIFVARGNS). Cystine bridges form between C22–C46, C25–C32, C39–C67, C73–C94, C95–C100, C118–C143, C136–C165, and C169–C191. A glycan (N-linked (GlcNAc...) asparagine; partial) is linked at N176.

As to quaternary structure, occurs as a mixture of oligomers. Tetrameric arrangement appears to be the predominant quaternary structure. Interacts with phospholipase A2 crotoxin basic subunit CBd; the interaction leads to dissociation of the CA-CB heterodimer and to inhibition of PLA2 activity of the CB subunit. In terms of processing, the carbohydrate moiety increases the inhibition capacity of CNF, but is not essential for activity and for oligomerization. In terms of tissue distribution, expressed by the liver.

The protein localises to the secreted. Functionally, inhibits the PLA2 activity of crotoxin (CTX) by replacing the acid subunit (CA) in the CTX complex. Displays a pro-inflammatory action through activation of important main signaling pathways for human leukocytes, in vitro. Abolishes both the muscle-paralyzing and muscle-damaging activities of CTX in mice phrenic nerve-diaphragm muscle preparations. This Crotalus durissus terrificus (South American rattlesnake) protein is Phospholipase A2 inhibitor CNF.